The following is a 266-amino-acid chain: Tryptophan synthase alpha chain (266 aa).

Active-site proton acceptor residues include Glu51 and Asp62.

The protein belongs to the TrpA family. In terms of assembly, tetramer of two alpha and two beta chains.

The enzyme catalyses (1S,2R)-1-C-(indol-3-yl)glycerol 3-phosphate + L-serine = D-glyceraldehyde 3-phosphate + L-tryptophan + H2O. Its pathway is amino-acid biosynthesis; L-tryptophan biosynthesis; L-tryptophan from chorismate: step 5/5. In terms of biological role, the alpha subunit is responsible for the aldol cleavage of indoleglycerol phosphate to indole and glyceraldehyde 3-phosphate. The sequence is that of Tryptophan synthase alpha chain from Prochlorococcus marinus (strain NATL1A).